Reading from the N-terminus, the 597-residue chain is Protein GRISEA (597 aa).

Residues 1 to 41 (MPIINGQKMACGPCIRGHRSTKCNHYNERVMVPVRKPGRPL) constitute a DNA-binding region (copper-fist). Residues cysteine 11, cysteine 14, cysteine 23, and histidine 25 each contribute to the Zn(2+) site. 4 disordered regions span residues 70–115 (PAGT…ASRR), 233–352 (AFVD…PGFG), 407–428 (SRPPTQQQHETPISATAPNGNN), and 467–541 (SPNS…SPAL). Positions 92 to 103 (SPASRTSSNRVT) are enriched in polar residues. Low complexity predominate over residues 104–115 (KSGSGSKSASRR). A compositionally biased stretch (gly residues) spans 269-281 (GGSGGGGCCGGGK). The span at 287 to 314 (QAPPPVPAPLPTPPQQQMPNIMPPPQPQ) shows a compositional bias: pro residues. Over residues 469-495 (NSSHGNSGSADSSANASPSANPLNLAS) the composition is skewed to low complexity. Over residues 521–530 (ANESDGSSNA) the composition is skewed to polar residues.

The protein resides in the nucleus. Its function is as follows. Copper-sensing transcription factor that regulates copper uptake by transactivation of Ctr3, a high affinity copper permease. Binds to the palindromic UAS sequence 5'-TGTTGCTCANNNNAGAGCAACT-3'. Also transactivates Sod2, a mitochondrial manganese superoxide dismutase through the palindromic UAS sequence 5'-GTTTGCTCA-3' with 352 bp separating the two inverted repeats. Loss of function indirectly leads to rearrangement of mitochondrial DNA associated with senescence in wild-type strains. The polypeptide is Protein GRISEA (Podospora anserina (Pleurage anserina)).